The following is a 340-amino-acid chain: Phenylalanine--tRNA ligase alpha subunit (340 aa).

Glu-255 lines the Mg(2+) pocket.

The protein belongs to the class-II aminoacyl-tRNA synthetase family. Phe-tRNA synthetase alpha subunit type 1 subfamily. Tetramer of two alpha and two beta subunits. Mg(2+) serves as cofactor.

The protein resides in the cytoplasm. It carries out the reaction tRNA(Phe) + L-phenylalanine + ATP = L-phenylalanyl-tRNA(Phe) + AMP + diphosphate + H(+). The chain is Phenylalanine--tRNA ligase alpha subunit from Desulforamulus reducens (strain ATCC BAA-1160 / DSM 100696 / MI-1) (Desulfotomaculum reducens).